Consider the following 449-residue polypeptide: Methylenetetrahydrofolate--tRNA-(uracil-5-)-methyltransferase TrmFO (449 aa).

9–14 (GGGIAG) contributes to the FAD binding site.

This sequence belongs to the MnmG family. TrmFO subfamily. FAD serves as cofactor.

It is found in the cytoplasm. The catalysed reaction is uridine(54) in tRNA + (6R)-5,10-methylene-5,6,7,8-tetrahydrofolate + NADH + H(+) = 5-methyluridine(54) in tRNA + (6S)-5,6,7,8-tetrahydrofolate + NAD(+). It catalyses the reaction uridine(54) in tRNA + (6R)-5,10-methylene-5,6,7,8-tetrahydrofolate + NADPH + H(+) = 5-methyluridine(54) in tRNA + (6S)-5,6,7,8-tetrahydrofolate + NADP(+). Its function is as follows. Catalyzes the folate-dependent formation of 5-methyl-uridine at position 54 (M-5-U54) in all tRNAs. This is Methylenetetrahydrofolate--tRNA-(uracil-5-)-methyltransferase TrmFO from Gloeobacter violaceus (strain ATCC 29082 / PCC 7421).